We begin with the raw amino-acid sequence, 794 residues long: EVI5-like protein (794 aa).

Polar residues predominate over residues 1–30 (MASPTLSPDSSSQEALSAPTCSPTSDSENL). Disordered stretches follow at residues 1 to 36 (MASP…DELE) and 49 to 75 (EADS…SSSA). Residues 55 to 75 (MRSMNGSRRNSGSSLVSSSSA) show a composition bias toward low complexity. One can recognise a Rab-GAP TBC domain in the interval 115-300 (GIPHHFRAIV…RVFDIFMYEG (186 aa)). 2 coiled-coil regions span residues 358 to 449 (KKMK…QQEN) and 569 to 709 (EAQA…LKGP). Position 685 is a phosphoserine (Ser685). The disordered stretch occupies residues 766–794 (LERPAKDSEGSSDSDADELAAPYSQGLDN).

May interact with RAB10.

Functions as a GTPase-activating protein (GAP) with a broad specificity. This Homo sapiens (Human) protein is EVI5-like protein (EVI5L).